The chain runs to 442 residues: UDP-glycosyltransferase 79B7 (442 aa).

Residues serine 260, 319–321 (VQQ), 336–344 (HCGPGTIWE), and 358–361 (LSDQ) each bind UDP-alpha-D-glucose.

This sequence belongs to the UDP-glycosyltransferase family.

This is UDP-glycosyltransferase 79B7 (UGT79B7) from Arabidopsis thaliana (Mouse-ear cress).